The following is a 312-amino-acid chain: ECF RNA polymerase sigma factor SigJ (312 aa).

Residues 6-65 are sigma-70 factor domain-2; that stretch reads FEALRQHLMSVAYRLTGTVADAEDIVQEAWLRWDSPDTVIADPRAWLTTVVSRLGLDKLR. The Polymerase core binding motif lies at 29 to 32; that stretch reads DIVQ. The tract at residues 107-155 is sigma-70 factor domain-4; sequence MVVLERLRPDQRVAFVLHDGFAVPFAEVAEVLGTSEAAARQLASRARKA. The segment at residues 131-150 is a DNA-binding region (H-T-H motif); sequence FAEVAEVLGTSEAAARQLAS. A disordered region spans residues 293–312; it reads GSPLKERRAQPTGRGRHHRN.

It belongs to the sigma-70 factor family. ECF subfamily. Interacts transiently with the RNA polymerase catalytic core formed by RpoA, RpoB, RpoC and RpoZ (2 alpha, 1 beta, 1 beta' and 1 omega subunit) to form the RNA polymerase holoenzyme that can initiate transcription.

In terms of biological role, sigma factors are initiation factors that promote the attachment of RNA polymerase to specific initiation sites and are then released. Extracytoplasmic function (ECF) sigma factors are held in an inactive form by an anti-sigma factor until released, although no anti-sigma factor is known for this protein. Regulates the promoter of SigI, may not be autoregulated. The chain is ECF RNA polymerase sigma factor SigJ (sigJ) from Mycobacterium tuberculosis (strain ATCC 25618 / H37Rv).